We begin with the raw amino-acid sequence, 306 residues long: Ethylmalonyl-CoA decarboxylase (306 aa).

Position 216 is an N6-acetyllysine; alternate (Lys-216). Residue Lys-216 is modified to N6-succinyllysine; alternate.

This sequence belongs to the enoyl-CoA hydratase/isomerase family.

The protein localises to the cytoplasm. It is found in the cytosol. The catalysed reaction is (2S)-ethylmalonyl-CoA + H(+) = butanoyl-CoA + CO2. It carries out the reaction (S)-methylmalonyl-CoA + H(+) = propanoyl-CoA + CO2. The enzyme catalyses (2R)-ethylmalonyl-CoA + H(+) = butanoyl-CoA + CO2. Decarboxylates ethylmalonyl-CoA, a potentially toxic metabolite, to form butyryl-CoA, suggesting it might be involved in metabolite proofreading. Acts preferentially on (S)-ethylmalonyl-CoA but also has some activity on the (R)-isomer. Also has methylmalonyl-CoA decarboxylase activity at lower level. The sequence is that of Ethylmalonyl-CoA decarboxylase (ECHDC1) from Bos taurus (Bovine).